Reading from the N-terminus, the 358-residue chain is Cyclin-dependent kinase 11 (358 aa).

Positions 52 to 336 (FKKLYTINEG…ASDALKHPYF (285 aa)) constitute a Protein kinase domain. ATP-binding positions include 58-66 (INEGAFGVV) and K81. The active-site Proton acceptor is the D176.

It belongs to the protein kinase superfamily. CMGC Ser/Thr protein kinase family. CDC2/CDKX subfamily.

The enzyme catalyses L-seryl-[protein] + ATP = O-phospho-L-seryl-[protein] + ADP + H(+). It carries out the reaction L-threonyl-[protein] + ATP = O-phospho-L-threonyl-[protein] + ADP + H(+). The chain is Cyclin-dependent kinase 11 (cdk11) from Dictyostelium discoideum (Social amoeba).